A 206-amino-acid chain; its full sequence is High frequency lysogenization protein HflD homolog (206 aa).

It belongs to the HflD family.

The protein localises to the cytoplasm. It is found in the cell inner membrane. This is High frequency lysogenization protein HflD homolog from Pseudomonas savastanoi pv. phaseolicola (strain 1448A / Race 6) (Pseudomonas syringae pv. phaseolicola (strain 1448A / Race 6)).